Reading from the N-terminus, the 143-residue chain is S-adenosylmethionine decarboxylase proenzyme (143 aa).

Residue S66 is the Schiff-base intermediate with substrate; via pyruvic acid of the active site. The residue at position 66 (S66) is a Pyruvic acid (Ser); by autocatalysis. The active-site Proton acceptor; for processing activity is the H71. C86 (proton donor; for catalytic activity) is an active-site residue.

Belongs to the prokaryotic AdoMetDC family. Type 1 subfamily. Heterotetramer of two alpha and two beta chains arranged as a dimer of alpha/beta heterodimers. Pyruvate serves as cofactor. Is synthesized initially as an inactive proenzyme. Formation of the active enzyme involves a self-maturation process in which the active site pyruvoyl group is generated from an internal serine residue via an autocatalytic post-translational modification. Two non-identical subunits are generated from the proenzyme in this reaction, and the pyruvate is formed at the N-terminus of the alpha chain, which is derived from the carboxyl end of the proenzyme. The post-translation cleavage follows an unusual pathway, termed non-hydrolytic serinolysis, in which the side chain hydroxyl group of the serine supplies its oxygen atom to form the C-terminus of the beta chain, while the remainder of the serine residue undergoes an oxidative deamination to produce ammonia and the pyruvoyl group blocking the N-terminus of the alpha chain.

The enzyme catalyses S-adenosyl-L-methionine + H(+) = S-adenosyl 3-(methylsulfanyl)propylamine + CO2. It functions in the pathway amine and polyamine biosynthesis; S-adenosylmethioninamine biosynthesis; S-adenosylmethioninamine from S-adenosyl-L-methionine: step 1/1. In terms of biological role, catalyzes the decarboxylation of S-adenosylmethionine to S-adenosylmethioninamine (dcAdoMet), the propylamine donor required for the synthesis of the polyamines spermine and spermidine from the diamine putrescine. The chain is S-adenosylmethionine decarboxylase proenzyme from Thermococcus gammatolerans (strain DSM 15229 / JCM 11827 / EJ3).